The chain runs to 316 residues: Peroxidase 31 (316 aa).

An N-terminal signal peptide occupies residues 1-19 (MASLKSLFLLFLFFFTAQS). 4 disulfides stabilise this stretch: Cys-30/Cys-111, Cys-63/Cys-68, Cys-117/Cys-312, and Cys-196/Cys-222. The Proton acceptor role is filled by His-61. Residues Asp-62, Gly-67, Asp-69, and Ser-71 each coordinate Ca(2+). Pro-159 is a substrate binding site. His-189 provides a ligand contact to heme b. A Ca(2+)-binding site is contributed by Ser-190. Asn-206 carries an N-linked (GlcNAc...) asparagine glycan. 3 residues coordinate Ca(2+): Asp-236, Thr-239, and Asp-244.

It belongs to the peroxidase family. Classical plant (class III) peroxidase subfamily. It depends on heme b as a cofactor. The cofactor is Ca(2+).

It is found in the secreted. The catalysed reaction is 2 a phenolic donor + H2O2 = 2 a phenolic radical donor + 2 H2O. Its function is as follows. Removal of H(2)O(2), oxidation of toxic reductants, biosynthesis and degradation of lignin, suberization, auxin catabolism, response to environmental stresses such as wounding, pathogen attack and oxidative stress. These functions might be dependent on each isozyme/isoform in each plant tissue. The protein is Peroxidase 31 (PER31) of Arabidopsis thaliana (Mouse-ear cress).